The chain runs to 279 residues: Energy-coupling factor transporter ATP-binding protein EcfA1 (279 aa).

The ABC transporter domain maps to 6 to 240 (VRLEHVFYKY…ADAMREIGLG (235 aa)). 40 to 47 (GHNGSGKS) provides a ligand contact to ATP.

Belongs to the ABC transporter superfamily. Energy-coupling factor EcfA family. In terms of assembly, forms a stable energy-coupling factor (ECF) transporter complex composed of 2 membrane-embedded substrate-binding proteins (S component), 2 ATP-binding proteins (A component) and 2 transmembrane proteins (T component).

The protein resides in the cell membrane. Functionally, ATP-binding (A) component of a common energy-coupling factor (ECF) ABC-transporter complex. Unlike classic ABC transporters this ECF transporter provides the energy necessary to transport a number of different substrates. The protein is Energy-coupling factor transporter ATP-binding protein EcfA1 of Listeria monocytogenes serovar 1/2a (strain ATCC BAA-679 / EGD-e).